The sequence spans 239 residues: Non-classical arabinogalactan protein 30 (239 aa).

A signal peptide spans Met1–Thr24. Residue Asn106 is glycosylated (N-linked (GlcNAc...) asparagine).

This sequence belongs to the non-classical AGP family. In terms of tissue distribution, specifically expressed in root tips.

It localises to the secreted. The protein resides in the cell wall. Proteoglycan required for the timing of seed germination. May function in the abscisic acid (ABA) response. The protein is Non-classical arabinogalactan protein 30 of Arabidopsis thaliana (Mouse-ear cress).